Consider the following 500-residue polypeptide: Abscisic acid 8'-hydroxylase 3 (500 aa).

A helical transmembrane segment spans residues 3-23 (ASFVIVIVISFFISLAFMCYV). A heme-binding site is contributed by Cys426.

The protein belongs to the cytochrome P450 family. Requires heme as cofactor.

It localises to the membrane. The enzyme catalyses 2-cis-(+)-abscisate + reduced [NADPH--hemoprotein reductase] + O2 = (+)-8'-hydroxyabscisate + oxidized [NADPH--hemoprotein reductase] + H2O + H(+). It functions in the pathway plant hormone degradation; abscisic acid degradation. In terms of biological role, involved in the oxidative degradation of abscisic acid. The polypeptide is Abscisic acid 8'-hydroxylase 3 (CYP707A7) (Oryza sativa subsp. japonica (Rice)).